The sequence spans 177 residues: Protein GrpE (177 aa).

2 stretches are compositionally biased toward basic and acidic residues: residues 1-19 (MAKHKHEEHPEDVEVKETV) and 29-41 (SPEKSELELANER). A disordered region spans residues 1 to 41 (MAKHKHEEHPEDVEVKETVETAEQAESASPEKSELELANER).

This sequence belongs to the GrpE family. As to quaternary structure, homodimer.

The protein resides in the cytoplasm. Functionally, participates actively in the response to hyperosmotic and heat shock by preventing the aggregation of stress-denatured proteins, in association with DnaK and GrpE. It is the nucleotide exchange factor for DnaK and may function as a thermosensor. Unfolded proteins bind initially to DnaJ; upon interaction with the DnaJ-bound protein, DnaK hydrolyzes its bound ATP, resulting in the formation of a stable complex. GrpE releases ADP from DnaK; ATP binding to DnaK triggers the release of the substrate protein, thus completing the reaction cycle. Several rounds of ATP-dependent interactions between DnaJ, DnaK and GrpE are required for fully efficient folding. The sequence is that of Protein GrpE from Streptococcus gordonii (strain Challis / ATCC 35105 / BCRC 15272 / CH1 / DL1 / V288).